The chain runs to 343 residues: Glyceraldehyde-3-phosphate dehydrogenase (343 aa).

NAD(+)-binding positions include T13–I14 and G112. Residue S141–N143 participates in D-glyceraldehyde 3-phosphate binding. C142 (nucleophile) is an active-site residue. R170 provides a ligand contact to NAD(+). H196–A197 contributes to the D-glyceraldehyde 3-phosphate binding site. Q303 lines the NAD(+) pocket.

Belongs to the glyceraldehyde-3-phosphate dehydrogenase family. In terms of assembly, homotetramer.

It is found in the cytoplasm. It carries out the reaction D-glyceraldehyde 3-phosphate + phosphate + NADP(+) = (2R)-3-phospho-glyceroyl phosphate + NADPH + H(+). The enzyme catalyses D-glyceraldehyde 3-phosphate + phosphate + NAD(+) = (2R)-3-phospho-glyceroyl phosphate + NADH + H(+). It participates in carbohydrate degradation; glycolysis; pyruvate from D-glyceraldehyde 3-phosphate: step 1/5. The sequence is that of Glyceraldehyde-3-phosphate dehydrogenase (gap) from Aeropyrum pernix (strain ATCC 700893 / DSM 11879 / JCM 9820 / NBRC 100138 / K1).